The primary structure comprises 89 residues: MQTSNSESVSAALTEILRDDMNVDIRRVTRESRLIDDVGLDSVAFAVGMVAIEDRLGVALTEEDLLSCDTVGDLEAAIQAKVPSSPSGQ.

The region spanning 7–82 (ESVSAALTEI…DLEAAIQAKV (76 aa)) is the Carrier domain. The residue at position 42 (Ser42) is an O-(pantetheine 4'-phosphoryl)serine.

In terms of processing, 4'-phosphopantetheine is transferred from CoA to a specific serine of apo-ACP, leading to the activated holo-ACP form.

It localises to the cytoplasm. The protein operates within siderophore biosynthesis; mycobactin biosynthesis. Functionally, acyl carrier protein involved in the formation of acyl-S-ACP intermediates within the mycobactin biosynthesis process. The chain is Acyl carrier protein MbtL (mbtL) from Mycobacterium sp. (strain MCS).